Reading from the N-terminus, the 752-residue chain is Myb-related protein A (752 aa).

The disordered stretch occupies residues 1 to 22 (MAKRSRSEDEDDDLQYADHDYE). 3 consecutive HTH myb-type domains span residues 30–81 (KKLW…QKVL), 82–137 (NPEL…NPEV), and 138–188 (KKSS…RRKV). DNA-binding regions (H-T-H motif) lie at residues 58–81 (WTLI…QKVL), 110–133 (WSLI…HNHL), and 161–184 (WAEI…NSTM). K199 is covalently cross-linked (Glycyl lysine isopeptide (Lys-Gly) (interchain with G-Cter in SUMO2)). Residues 230–295 (IPGYQYVSPE…RIPSQPGSFS (66 aa)) are transcriptional activation domain. A negative regulatory domain region spans residues 298-553 (SGSFLMDDNM…IRRSILGTTP (256 aa)). K394 carries the N6-acetyllysine modification. A disordered region spans residues 451–480 (RKMRVGHSPGSELRDGSLNDGGNMALKHTP). Residues K592 and K602 each participate in a glycyl lysine isopeptide (Lys-Gly) (interchain with G-Cter in SUMO2) cross-link.

In terms of assembly, component of the DREAM complex (also named LINC complex) at least composed of E2F4, E2F5, LIN9, LIN37, LIN52, LIN54, MYBL1, MYBL2, RBL1, RBL2, RBBP4, TFDP1 and TFDP2. The complex exists in quiescent cells where it represses cell cycle-dependent genes. It dissociates in S phase when LIN9, LIN37, LIN52 and LIN54 form a subcomplex that binds to MYBL2. In terms of tissue distribution, expressed in a variety of lymphoid and solid tumor lines cultured in vitro.

The protein resides in the nucleus. Transcription factor that specifically recognizes the sequence 5'-YAAC[GT]G-3'. Acts as a master regulator of male meiosis by promoting expression of piRNAs: activates expression of both piRNA precursor RNAs and expression of protein-coding genes involved in piRNA metabolism. The piRNA metabolic process mediates the repression of transposable elements during meiosis by forming complexes composed of piRNAs and Piwi proteins and governs the methylation and subsequent repression of transposons, which is essential for the germline integrity. Transcriptional activator of SOX30. This is Myb-related protein A (MYBL1) from Homo sapiens (Human).